The following is a 791-amino-acid chain: Ataxin-2 homolog (791 aa).

Positions 1 to 22 are enriched in polar residues; it reads MATRSVSMKQTSQRAASPNKTQ. 8 disordered regions span residues 1 to 28, 60 to 100, 112 to 134, 235 to 311, 326 to 423, 452 to 505, 613 to 634, and 707 to 791; these read MATRSVSMKQTSQRAASPNKTQGAKKWS, RGGV…QQRV, RTETRQRELRRWMPDPEDAGVPL, TRSN…KEGQ, SLDS…TKLG, KPAP…PVSS, NPSQHTSVAPSPNGTPTSGNSS, and PMYG…EAKP. The segment covering 76–96 has biased composition (low complexity); that stretch reads SLASSEENVSSVSGSAKSNNS. 2 stretches are compositionally biased toward basic and acidic residues: residues 112-125 and 243-256; these read RTETRQRELRRWMP and NNKDQKPKNHEAPH. The segment covering 326-337 has biased composition (polar residues); the sequence is SLDSKQPSSTKS. 2 stretches are compositionally biased toward basic and acidic residues: residues 360–371 and 395–418; these read DSKEPRKEEAEK and SKEEEKPSTEPEKPSVVTQRKETT. Positions 473 to 486 are enriched in low complexity; it reads SIPSTTPQSPSVVS. Polar residues predominate over residues 487-497; that stretch reads NGENKPSSSPV. 2 stretches are compositionally biased toward low complexity: residues 715-725 and 734-760; these read SNSQRSFNSSN and NNNASNTFSHSNASTSSSLNAAPNTTA. The span at 774–791 shows a compositional bias: basic and acidic residues; it reads DATEKTEKDASANQEAKP.

This sequence belongs to the ataxin-2 family. In terms of assembly, interacts with mkt1.

The protein resides in the cytoplasm. Its function is as follows. Involved in post-transcriptional regulation of gene expression, probably by association with mkt1. The polypeptide is Ataxin-2 homolog (Schizosaccharomyces pombe (strain 972 / ATCC 24843) (Fission yeast)).